The sequence spans 69 residues: Snake venom metalloproteinase BnP2 (69 aa).

The 69-residue stretch at 1-69 (YIELAVVADH…EWRERDIIPR (69 aa)) folds into the Peptidase M12B domain. Ca(2+) is bound at residue E3.

The protein belongs to the venom metalloproteinase (M12B) family. P-I subfamily. Monomer. The cofactor is Zn(2+). In terms of tissue distribution, expressed by the venom gland.

The protein localises to the secreted. With respect to regulation, inhibited by EDTA. This protein is a zinc protease from snake venom that is devoid of significant myotoxic and hemorrhagic activities. It hydrolyzes the Aalpha-chain and more slowly the Bbeta-chain of fibrin and fibrinogen, without affecting the gamma-chains. It induces cell detachment and a apoptosis (anoikis) in endothelial cells. This Bothrops pauloensis (Neuwied's lancehead) protein is Snake venom metalloproteinase BnP2.